Reading from the N-terminus, the 469-residue chain is Glutamate--tRNA ligase (469 aa).

The 'HIGH' region motif lies at 9 to 19; the sequence is PSPTGFLHVGG. Residues Cys-98, Cys-100, Cys-125, and Asp-127 each contribute to the Zn(2+) site. A 'KMSKS' region motif is present at residues 236 to 240; it reads KLSKR. Residue Lys-239 participates in ATP binding.

Belongs to the class-I aminoacyl-tRNA synthetase family. Glutamate--tRNA ligase type 1 subfamily. In terms of assembly, monomer. The cofactor is Zn(2+).

It localises to the cytoplasm. The catalysed reaction is tRNA(Glu) + L-glutamate + ATP = L-glutamyl-tRNA(Glu) + AMP + diphosphate. Catalyzes the attachment of glutamate to tRNA(Glu) in a two-step reaction: glutamate is first activated by ATP to form Glu-AMP and then transferred to the acceptor end of tRNA(Glu). This Shewanella putrefaciens (strain CN-32 / ATCC BAA-453) protein is Glutamate--tRNA ligase.